The primary structure comprises 470 residues: MNSSYHPPDMSQRMPGPGYSSSVPPPIHAYQQQQQHQHPPPSLLPPPPTQHHHSSHAPPPPPPPSSSSHSLSSHQHHAPPPPHHHSQLPPYPPTQYQQPHPNQYPRPHPLPPSRNDEPPPPSSEPSPSDQHEKPKYEPPSVSKIEEGTGLKYSLDVQQQPIRARMCGFGDKDRRPITPPPCVRLVIINSETGKEVDYNTLDHAMFVLSVDLWDKDGIKEVNLVRSSTGPGSGASSNNYSYSTLEPSTPSYQQQALPPSRESGYPQGQGLGYAQEYPPSVQQGYGQAPSYQSSSSYGPPQQYFPRHSGYNTDPPASSANPLFRNGYGQDQNALTRMAVVGTQPQGMFTRNLIGSLAASAFRLNDTDKKAGIWFVLQDLSVRTEGTFRLRFSFVNVGGAGGGLPIHVNQGRAPILASCYSQDFSVYSAKKFPGVCESTPLSKTFALQGIKIPIRKDTNIKGEGDEEMMYDQN.

2 disordered regions span residues 1–148 (MNSS…EEGT) and 223–321 (VRSS…NPLF). Low complexity predominate over residues 15–37 (PGPGYSSSVPPPIHAYQQQQQHQ). Positions 38–49 (HPPPSLLPPPPT) are enriched in pro residues. Basic residues predominate over residues 74-86 (HQHHAPPPPHHHS). Over residues 102 to 124 (NQYPRPHPLPPSRNDEPPPPSSE) the composition is skewed to pro residues. A Velvet domain is found at 147-452 (GTGLKYSLDV…ALQGIKIPIR (306 aa)). Over residues 232–241 (GASSNNYSYS) the composition is skewed to low complexity. A compositionally biased stretch (polar residues) spans 242–255 (TLEPSTPSYQQQAL). Low complexity predominate over residues 280 to 301 (QQGYGQAPSYQSSSSYGPPQQY). The span at 307–318 (GYNTDPPASSAN) shows a compositional bias: polar residues.

The protein belongs to the velvet family. VelB subfamily. Component of the heterotrimeric velvet complex composed of laeA, veA and velB; VeA acting as a bridging protein between laeA and velB. Forms a heterodimeric complex with vosA; the formation of the velB-vosA complex is light-dependent.

It is found in the nucleus. Its subcellular location is the cytoplasm. In terms of biological role, component of the velvet transcription factor complex that controls sexual/asexual developmental ratio in response to light, promoting sexual development in the darkness while stimulating asexual sporulation under illumination. The velvet complex acts as a global regulator for secondary metabolite gene expression. Component of the velB-VosA heterodimeric complex that plays a dual role in activating genes associated with spore maturation and repressing certain development-associated genes. The complex binds DNA through the DNA-binding domain of vosA that recognizes an 11-nucleotide consensus sequence 5'-CTGGCCGCGGC-3' consisting of two motifs in the promoters of key developmental regulatory genes. Controls the expression of the pink pigment aurofusarin and the mycotoxin deoxynivalenol gene clusters. Regulates hyphae formation, hyphal hydrophobicity and conidiation. Regulates of cell wall integrity and pathogenicity. The polypeptide is Velvet complex subunit B (Gibberella zeae (strain ATCC MYA-4620 / CBS 123657 / FGSC 9075 / NRRL 31084 / PH-1) (Wheat head blight fungus)).